The chain runs to 139 residues: IRQNHQDEPQYGQQVAPIDQRVQRLVMALVFAAKSDGHIERKMRSIIEQNMREAGISEQGERLVQQAIDQPLDPQLLARDIQNEEEALELYFLSCAVIDVDHFMERTYLAALGHALKIPQDVRDGIEQDIREKKQSITD.

This sequence to E.coli YebE.

This is an uncharacterized protein from Yersinia enterocolitica.